The following is a 272-amino-acid chain: Cytochrome b-c1 complex subunit Rieske-1, mitochondrial (272 aa).

The transit peptide at 1-60 (MLRVAGRRLFSVSQRSSTATSFVVSRDHTLSDGGGDSSSAPRSLPSADLSSYHRSLIRGF) directs the protein to the mitochondrion. A disordered region spans residues 27–46 (DHTLSDGGGDSSSAPRSLPS). At 61-109 (SSQVLAQGNEIGFGSEVPATVEAVKTPNSKIVYDDHNHERYPPGDPSKR) the chain is on the mitochondrial matrix side. The helical transmembrane segment at 110-132 (AFAYFVLSGGRFVYASVLRLLVL) threads the bilayer. The Mitochondrial intermembrane segment spans residues 133-272 (KLIVSMSASK…FLEENKLLIG (140 aa)). The region spanning 201-270 (VRVKNPEWLV…YSFLEENKLL (70 aa)) is the Rieske domain. 4 residues coordinate [2Fe-2S] cluster: C215, H217, C234, and H237. C220 and C236 are joined by a disulfide.

The protein belongs to the Rieske iron-sulfur protein family. In terms of assembly, component of the ubiquinol-cytochrome c oxidoreductase (cytochrome b-c1 complex, complex III, CIII), a multisubunit enzyme composed of 10 subunits. The complex is composed of 3 respiratory subunits cytochrome b (MT-CYB), cytochrome c1 (CYC1-1 or CYC1-2) and Rieske protein (UCR1-1 or UCR1-2), 2 core protein subunits MPPalpha1 (or MPPalpha2) and MPPB, and 5 low-molecular weight protein subunits QCR7-1 (or QCR7-2), UCRQ-1 (or UCRQ-2), QCR9, UCRY and probably QCR6-1 (or QCR6-2). The complex exists as an obligatory dimer and forms supercomplexes (SCs) in the inner mitochondrial membrane with NADH-ubiquinone oxidoreductase (complex I, CI), resulting in different assemblies (supercomplexes SCI(1)III(2) and SCI(2)III(4)). [2Fe-2S] cluster serves as cofactor.

It localises to the mitochondrion inner membrane. It carries out the reaction a quinol + 2 Fe(III)-[cytochrome c](out) = a quinone + 2 Fe(II)-[cytochrome c](out) + 2 H(+)(out). Functionally, component of the ubiquinol-cytochrome c oxidoreductase, a multisubunit transmembrane complex that is part of the mitochondrial electron transport chain which drives oxidative phosphorylation. The respiratory chain contains 3 multisubunit complexes succinate dehydrogenase (complex II, CII), ubiquinol-cytochrome c oxidoreductase (cytochrome b-c1 complex, complex III, CIII) and cytochrome c oxidase (complex IV, CIV), that cooperate to transfer electrons derived from NADH and succinate to molecular oxygen, creating an electrochemical gradient over the inner membrane that drives transmembrane transport and the ATP synthase. The cytochrome b-c1 complex catalyzes electron transfer from ubiquinol to cytochrome c, linking this redox reaction to translocation of protons across the mitochondrial inner membrane, with protons being carried across the membrane as hydrogens on the quinol. In the process called Q cycle, 2 protons are consumed from the matrix, 4 protons are released into the intermembrane space and 2 electrons are passed to cytochrome c. The Rieske protein is a catalytic core subunit containing a [2Fe-2S] iron-sulfur cluster. It cycles between 2 conformational states during catalysis to transfer electrons from the quinol bound in the Q(0) site in cytochrome b to cytochrome c1. This Arabidopsis thaliana (Mouse-ear cress) protein is Cytochrome b-c1 complex subunit Rieske-1, mitochondrial.